The following is an 875-amino-acid chain: Serrate RNA effector molecule homolog (875 aa).

Positions 1-90 are disordered; it reads MGDSDDEYDR…RRDWDEHSSD (90 aa). G2 carries the N-acetylglycine modification. A Phosphoserine modification is found at S4. Y8 is subject to Phosphotyrosine. The segment covering 8–73 has biased composition (basic and acidic residues); the sequence is YDRRRRDKFR…ERFSPPRHEL (66 aa). Phosphoserine is present on residues S67, S74, and S136. A Glycyl lysine isopeptide (Lys-Gly) (interchain with G-Cter in SUMO2) cross-link involves residue K150. The disordered stretch occupies residues 272–411; the sequence is EEEEQAGKTG…KPKDAAGLEC (140 aa). Positions 297 to 345 are enriched in basic and acidic residues; that stretch reads EGERKANDKDEKKEDGKQAENDSSNDDKTKKSEGDGDKEEKKEEAEKEA. The span at 369–386 shows a compositional bias: acidic residues; the sequence is SESESEGGQAEEEKEEAE. Residues 387 to 411 are compositionally biased toward basic and acidic residues; it reads EALKEKEKPKEEEKEKPKDAAGLEC. S492 and S539 each carry phosphoserine. The residue at position 543 (T543) is a Phosphothreonine. Residue S569 is modified to Phosphoserine. Residues 571–597 are disordered; that stretch reads EEEELLGSSGGPPPEEPPKEGNPAEIN. Phosphothreonine is present on T670. S678 is modified (phosphoserine). Residues R832, R839, and R849 each carry the omega-N-methylarginine modification. The segment at 834-853 is disordered; it reads NYDAFRGQGGYPGKPRNRMV.

It belongs to the ARS2 family. Interacts with CASP8AP2 and ERBB4. Interacts with NCBP1/CBP80 and DROSHA. Interacts with LUZP4. Interacts with NCBP2/CBP20 and NCBP3. Interacts with MTREX. Widely expressed, with a preference for proliferating cells. Highly expressed in hematopoietic tissues and reduced or absent expression in parenchymal organs like liver and kidney. In the brain, expressed in the subventricular zone by niche astrocytes, ependymal cells and neural stem cells. In this cerebral context, expressed in slowly dividing cells.

It is found in the nucleus. It localises to the nucleoplasm. The protein resides in the cytoplasm. Its function is as follows. Acts as a mediator between the cap-binding complex (CBC) and the primary microRNAs (miRNAs) processing machinery during cell proliferation. Contributes to the stability and delivery of capped primary miRNA transcripts to the primary miRNA processing complex containing DGCR8 and DROSHA, thereby playing a role in RNA-mediated gene silencing (RNAi) by miRNAs. Binds capped RNAs (m7GpppG-capped RNA); however interaction is probably mediated via its interaction with NCBP1/CBP80 component of the CBC complex. Involved in cell cycle progression at S phase. Does not directly confer arsenite resistance but rather modulates arsenic sensitivity. Independently of its activity on miRNAs, necessary and sufficient to promote neural stem cell self-renewal. Does so by directly binding SOX2 promoter and positively regulating its transcription. This is Serrate RNA effector molecule homolog (Srrt) from Mus musculus (Mouse).